A 487-amino-acid polypeptide reads, in one-letter code: Aspyridones efflux protein apdF (487 aa).

Basic and acidic residues predominate over residues 1-21 (MSSVRESSKDESIVHPPKAPE). The interval 1-25 (MSSVRESSKDESIVHPPKAPESEPF) is disordered. The chain crosses the membrane as a helical span at residues 35 to 55 (VALGAGGVLFCTFGYVNAFGV). N67 carries an N-linked (GlcNAc...) asparagine glycan. Transmembrane regions (helical) follow at residues 75 to 95 (WIGS…GPLF), 99 to 119 (GAKV…MTSL), 126 to 146 (FFLA…APAL), 159 to 179 (AAMG…PIAL), 191 to 211 (WAVR…VLGI), 234 to 254 (VATL…FFYL), 262 to 282 (GMST…SFFG), and 293 to 313 (IGPY…TFCW). The N-linked (GlcNAc...) asparagine glycan is linked to N319. A run of 3 helical transmembrane segments spans residues 322–342 (IIVF…ITPA), 354–374 (IGTY…IGPP), and 385–405 (GFLQ…VLAF).

The protein belongs to the major facilitator superfamily. Monocarboxylate porter (TC 2.A.1.13) family.

The protein localises to the cell membrane. In terms of biological role, efflux pump that may be involved in the secretion of aspyridones. The protein is Aspyridones efflux protein apdF of Emericella nidulans (strain FGSC A4 / ATCC 38163 / CBS 112.46 / NRRL 194 / M139) (Aspergillus nidulans).